The chain runs to 662 residues: MAVLTHGSPTPSGAYFDGKGINFTLFSAHAEQVTLCLFDEQGQERQIAMPARTGDIWHGYLPGGKPGQRYGYRVSGPFDPSRGHRFNPHKLLIDPRTRALEGKVGDDPRFTGGVSQPDVRDSAAALPKCLVIHEEYDWQGDKPPAIPWGNTVIYEAHVRGLTQLHPDIPPELRGTYAALAHPALIEHLKTLGITTLELLPVQFHIDEPRLQKMGLSNYWGYNVLAPFAVDPDYASGREGISPLRELRDAIKALHNAGIEVILDVVFNHSAELDVFGPTLCQRGIDNASYYWLTPDGEYDNITGCGNALRLSHPYVTQWVIDCLNYWRDSCHVDGFRFDLGTVLGRTPAFDQHAPLFAALAADERLSACKLIAEPWDIGLGGYQLGNFPTGFSEWNDQYRDAMRGFWLRGEVPRGTFAQHFAASSRLFEQRGRLPSASINQITAHDGFTLLDLLCFNQKHNQMNGEENRDGSDNNHSNNFGCEGLVADAAIWQRRKACQRALLTTLLLSQGTPMLLAGDEQGHSQQGNNNAYCQNNILTWLDWGSADRALMTFTADLIRLRQQIPALTQDQWWQSGDSNVQWLDSQGQALSDAAWEQGCQQQLQILLSQRWLVLINATDHECEMHLPEGEWEGIPPFGVSDHAERLTTWRGSAHTICVLIKRD.

The active-site Nucleophile is the Asp338. Glu373 (proton donor) is an active-site residue.

The protein belongs to the glycosyl hydrolase 13 family.

It catalyses the reaction Hydrolysis of (1-&gt;6)-alpha-D-glucosidic linkages to branches with degrees of polymerization of three or four glucose residues in limit dextrin.. It functions in the pathway glycan degradation; glycogen degradation. In terms of biological role, removes maltotriose and maltotetraose chains that are attached by 1,6-alpha-linkage to the limit dextrin main chain, generating a debranched limit dextrin. In Yersinia pseudotuberculosis serotype O:1b (strain IP 31758), this protein is Glycogen debranching enzyme.